A 726-amino-acid polypeptide reads, in one-letter code: Probable alpha-galactosidase G (726 aa).

Residues Asn-23, Asn-166, and Asn-456 are each glycosylated (N-linked (GlcNAc...) asparagine). Asp-485 functions as the Nucleophile in the catalytic mechanism. Asp-547 serves as the catalytic Proton donor. Residues Asn-657 and Asn-673 are each glycosylated (N-linked (GlcNAc...) asparagine).

The protein belongs to the glycosyl hydrolase 36 family. As to quaternary structure, homotetramer. Mg(2+) serves as cofactor. The cofactor is NAD(+).

Its subcellular location is the secreted. It catalyses the reaction Hydrolysis of terminal, non-reducing alpha-D-galactose residues in alpha-D-galactosides, including galactose oligosaccharides, galactomannans and galactolipids.. In terms of biological role, hydrolyzes a variety of simple alpha-D-galactoside as well as more complex molecules such as oligosaccharides and polysaccharides. Not active on paranitrophenyl-alpha-galactoside and raffinose. The polypeptide is Probable alpha-galactosidase G (aglG) (Emericella nidulans (strain FGSC A4 / ATCC 38163 / CBS 112.46 / NRRL 194 / M139) (Aspergillus nidulans)).